Here is a 499-residue protein sequence, read N- to C-terminus: Dual specificity protein kinase CLK2 (499 aa).

The interval 1-65 (MPHPRRYHSS…RSSYDDHSSD (65 aa)) is disordered. Basic and acidic residues predominate over residues 8-23 (HSSERGSRGSYHEHYQ). The span at 24-33 (SRKHKRRRSR) shows a compositional bias: basic residues. A Phosphoserine; by PKB/AKT1 modification is found at S34. Over residues 47-65 (REDSYHVRSRSSYDDHSSD) the composition is skewed to basic and acidic residues. S98 is modified (phosphoserine; by autocatalysis). Residue Y99 is modified to Phosphotyrosine; by autocatalysis. Residues 102-142 (HRENSSYRSQRSSRRKHRRRRRRSRTFSRSSSHSSRRAKSV) form a disordered region. Residues 112–127 (RSSRRKHRRRRRRSRT) show a composition bias toward basic residues. Position 127 is a phosphothreonine; by PKB/AKT1 (T127). S141 is subject to Phosphoserine; by autocatalysis. Y152 is modified (phosphotyrosine). A Protein kinase domain is found at 163–479 (EIVSTLGEGT…GEALQHPFFA (317 aa)). ATP-binding positions include 168–176 (LGEGTFGRV) and K192. Catalysis depends on D289, which acts as the Proton acceptor. Residue T343 is modified to Phosphothreonine; by PKB/AKT2.

It belongs to the protein kinase superfamily. CMGC Ser/Thr protein kinase family. Lammer subfamily. Interacts with RBMX and UBL5. Interacts with AKT1. Post-translationally, autophosphorylates on all three types of residues. Phosphorylation on Ser-34 and Thr-127 by AKT1 is induced by ionizing radiation or insulin. Phosphorylation plays a critical role in cell proliferation following low dose radiation and prevents cell death following high dose radiation. Phosphorylation at Thr-343 by PKB/AKT2 induces its kinase activity which is required for its stability. The phosphorylation status at Ser-141 influences its subnuclear localization; inhibition of phosphorylation at Ser-141 results in accumulation in the nuclear speckle.

It is found in the nucleus. The protein localises to the nucleus speckle. The enzyme catalyses L-seryl-[protein] + ATP = O-phospho-L-seryl-[protein] + ADP + H(+). It catalyses the reaction L-threonyl-[protein] + ATP = O-phospho-L-threonyl-[protein] + ADP + H(+). The catalysed reaction is L-tyrosyl-[protein] + ATP = O-phospho-L-tyrosyl-[protein] + ADP + H(+). 5,6-dichloro-1-b-D-ribofuranosylbenzimidazole (DRB) inhibits autophosphorylation. TG003 inhibits its kinase activity and affects the regulation of alternative splicing mediated by phosphorylation of SR proteins. In terms of biological role, dual specificity kinase acting on both serine/threonine and tyrosine-containing substrates. Phosphorylates serine- and arginine-rich (SR) proteins of the spliceosomal complex. May be a constituent of a network of regulatory mechanisms that enable SR proteins to control RNA splicing and can cause redistribution of SR proteins from speckles to a diffuse nucleoplasmic distribution. Acts as a suppressor of hepatic gluconeogenesis and glucose output by repressing PPARGC1A transcriptional activity on gluconeogenic genes via its phosphorylation. Phosphorylates PPP2R5B thereby stimulating the assembly of PP2A phosphatase with the PPP2R5B-AKT1 complex leading to dephosphorylation of AKT1. Phosphorylates: PTPN1, SRSF1 and SRSF3. Regulates the alternative splicing of tissue factor (F3) pre-mRNA in endothelial cells. Phosphorylates PAGE4 at several serine and threonine residues and this phosphorylation attenuates the ability of PAGE4 to potentiate the transcriptional activator activity of JUN. The protein is Dual specificity protein kinase CLK2 (Clk2) of Mus musculus (Mouse).